The following is a 589-amino-acid chain: tRNA (guanine(26)-N(2))-dimethyltransferase 2 (589 aa).

A Trm1 methyltransferase domain is found at 9-465; sequence TVIKEGEAEI…APMEVIWDIM (457 aa). S-adenosyl-L-methionine is bound at residue R36. The interval 51-122 is disordered; the sequence is KQEHEAKSSK…RFAPREPKPP (72 aa). Basic and acidic residues-rich tracts occupy residues 68–81 and 106–122; these read VIEKDASEASKEET and DPAKTTERFAPREPKPP. R134, D152, and V185 together coordinate S-adenosyl-L-methionine. Residues C315, C318, C350, and C353 each coordinate Zn(2+). The interval 550–589 is disordered; sequence LSQHHEELKEEDEEAEPEDNVQDKVDPKRQKTATDNITST. Residues 558–569 show a composition bias toward acidic residues; that stretch reads KEEDEEAEPEDN.

The protein belongs to the class I-like SAM-binding methyltransferase superfamily. Trm1 family.

It catalyses the reaction guanosine(26) in tRNA + 2 S-adenosyl-L-methionine = N(2)-dimethylguanosine(26) in tRNA + 2 S-adenosyl-L-homocysteine + 2 H(+). Dimethylates a single guanine residue at position 26 of most tRNAs using S-adenosyl-L-methionine as donor of the methyl groups. This is tRNA (guanine(26)-N(2))-dimethyltransferase 2 from Arabidopsis thaliana (Mouse-ear cress).